The primary structure comprises 468 residues: 6-phospho-beta-galactosidase (468 aa).

5 residues coordinate D-galactose 6-phosphate: Gln-19, His-116, Asn-159, Glu-160, and Asn-297. Residue Glu-160 is the Proton donor of the active site. Catalysis depends on Glu-375, which acts as the Nucleophile. Positions 428, 429, 435, and 437 each coordinate D-galactose 6-phosphate.

It belongs to the glycosyl hydrolase 1 family.

It carries out the reaction a 6-phospho-beta-D-galactoside + H2O = D-galactose 6-phosphate + an alcohol. It participates in carbohydrate metabolism; lactose degradation; D-galactose 6-phosphate and beta-D-glucose from lactose 6-phosphate: step 1/1. The chain is 6-phospho-beta-galactosidase from Streptococcus pyogenes serotype M28 (strain MGAS6180).